Reading from the N-terminus, the 82-residue chain is uncharacterized protein (82 aa).

This is an uncharacterized protein from Lactococcus lactis subsp. lactis (Streptococcus lactis).